The primary structure comprises 224 residues: MANSVFWAIAVALVLGAEAYMPLDYRCGVKPKSRDNCGPPGISPDECVKKGCCFDDSDPDSIWCYTPWKFEDTICNPAEPKARVNCGYPGITSQDCDKKGCCFNDTIPNVVWCYQPIIEAVERDCSAVEPKKRVNCGPPGVSPDECIKNGCCFNSDVGGVPWCFKPEIKKELLQCAVLPKARINCGYPDITMDQCYKKGCCYDSSESDSIWCFYPDIEDVTIIE.

A signal peptide spans 1–17 (MANSVFWAIAVALVLGA). 4 consecutive P-type domains span residues 25-68 (YRCG…YTPW), 73-117 (TICN…YQPI), 123-167 (RDCS…FKPE), and 173-216 (LQCA…FYPD). 12 disulfide bridges follow: cysteine 27/cysteine 53, cysteine 37/cysteine 52, cysteine 47/cysteine 64, cysteine 75/cysteine 102, cysteine 86/cysteine 101, cysteine 96/cysteine 113, cysteine 125/cysteine 152, cysteine 136/cysteine 151, cysteine 146/cysteine 163, cysteine 175/cysteine 201, cysteine 185/cysteine 200, and cysteine 195/cysteine 212. Asparagine 104 is a glycosylation site (N-linked (GlcNAc...) asparagine).

In terms of processing, glycosylated. As to expression, stomach mucosa.

Its subcellular location is the secreted. Its function is as follows. May act as a growth factor. The polypeptide is Putative gastrointestinal growth factor xP4 (p4) (Xenopus laevis (African clawed frog)).